Here is a 328-residue protein sequence, read N- to C-terminus: MIEKIWSGESPLWRLLLPLSWLYGLVSGAIRLCYKLKLKRAWRAPVPVVVVGNLTAGGNGKTPVVVWLVEQLQQRGIRVGVVSRGYGGKAESYPLLLSADTTTAQAGDEPVLIYQRTDAPVAVSPVRSDAVKAILAQHPDVQIIVTDDGLQHYCLARDVEIVVIDGVRRFGNGWWLPAGPMRERAGRLKSIDAVIVNGGVPRSGEIPMHLLPGQAVNLRTGTRCDVAQLEHVVAMAGIGHPPRFFATLKMCGVQPEKCVPLADHQSLNHADVSALVSTGQTLVMTEKDAVKCWAFAEENWWYLPVDAQLSGDEPAKLLAQLTSLASGN.

Residue 55–62 (TAGGNGKT) coordinates ATP.

It belongs to the LpxK family.

The catalysed reaction is a lipid A disaccharide + ATP = a lipid IVA + ADP + H(+). Its pathway is glycolipid biosynthesis; lipid IV(A) biosynthesis; lipid IV(A) from (3R)-3-hydroxytetradecanoyl-[acyl-carrier-protein] and UDP-N-acetyl-alpha-D-glucosamine: step 6/6. Transfers the gamma-phosphate of ATP to the 4'-position of a tetraacyldisaccharide 1-phosphate intermediate (termed DS-1-P) to form tetraacyldisaccharide 1,4'-bis-phosphate (lipid IVA). In Shigella dysenteriae serotype 1 (strain Sd197), this protein is Tetraacyldisaccharide 4'-kinase.